Reading from the N-terminus, the 245-residue chain is 1-(5-phosphoribosyl)-5-[(5-phosphoribosylamino)methylideneamino] imidazole-4-carboxamide isomerase (245 aa).

Asp8 serves as the catalytic Proton acceptor. Asp130 serves as the catalytic Proton donor.

The protein belongs to the HisA/HisF family.

It is found in the cytoplasm. The catalysed reaction is 1-(5-phospho-beta-D-ribosyl)-5-[(5-phospho-beta-D-ribosylamino)methylideneamino]imidazole-4-carboxamide = 5-[(5-phospho-1-deoxy-D-ribulos-1-ylimino)methylamino]-1-(5-phospho-beta-D-ribosyl)imidazole-4-carboxamide. It functions in the pathway amino-acid biosynthesis; L-histidine biosynthesis; L-histidine from 5-phospho-alpha-D-ribose 1-diphosphate: step 4/9. This is 1-(5-phosphoribosyl)-5-[(5-phosphoribosylamino)methylideneamino] imidazole-4-carboxamide isomerase from Marinobacter nauticus (strain ATCC 700491 / DSM 11845 / VT8) (Marinobacter aquaeolei).